The sequence spans 113 residues: Large ribosomal subunit protein bL17 (113 aa).

It belongs to the bacterial ribosomal protein bL17 family. Part of the 50S ribosomal subunit. Contacts protein L32.

This is Large ribosomal subunit protein bL17 from Clostridium tetani (strain Massachusetts / E88).